The following is a 152-amino-acid chain: MNKITNNVTIWIKPKTVEKKWYVIDAADRVLGKVAVDVVRILRGKHKAYYTPHQDLGDNVIVINASKVRLTGKKYQQKLYYRHSRYPGGLYSDTFRTLSERKPCAPLEIAIKGMLPKGPLGRGLFRNLKVFSGSEHTLKAQNPVKLEANLER.

This sequence belongs to the universal ribosomal protein uL13 family. As to quaternary structure, part of the 50S ribosomal subunit.

Its function is as follows. This protein is one of the early assembly proteins of the 50S ribosomal subunit, although it is not seen to bind rRNA by itself. It is important during the early stages of 50S assembly. The chain is Large ribosomal subunit protein uL13 from Borreliella afzelii (strain PKo) (Borrelia afzelii).